The sequence spans 199 residues: FMN-dependent NADH:quinone oxidoreductase 1 (199 aa).

Residues Ser10, 17 to 19 (SNS), and 87 to 90 (MYNF) contribute to the FMN site.

It belongs to the azoreductase type 1 family. Homodimer. It depends on FMN as a cofactor.

The enzyme catalyses 2 a quinone + NADH + H(+) = 2 a 1,4-benzosemiquinone + NAD(+). It catalyses the reaction N,N-dimethyl-1,4-phenylenediamine + anthranilate + 2 NAD(+) = 2-(4-dimethylaminophenyl)diazenylbenzoate + 2 NADH + 2 H(+). Its function is as follows. Quinone reductase that provides resistance to thiol-specific stress caused by electrophilic quinones. Also exhibits azoreductase activity. Catalyzes the reductive cleavage of the azo bond in aromatic azo compounds to the corresponding amines. The chain is FMN-dependent NADH:quinone oxidoreductase 1 from Mesoplasma florum (strain ATCC 33453 / NBRC 100688 / NCTC 11704 / L1) (Acholeplasma florum).